A 790-amino-acid chain; its full sequence is GATOR2 complex protein WDR24 (790 aa).

6 WD repeats span residues 72–112 (SLNL…RNKQ), 118–158 (EHKR…SVST), 161–201 (GQSE…RCER), 205–245 (AHNG…AKEM), 249–291 (QTIA…VPAA), and 295–338 (EHRD…VERA). Ser-155 carries the post-translational modification Phosphoserine; by AMPK. Residues Ser-470 and Ser-496 each carry the phosphoserine modification. Phosphothreonine is present on Thr-581. Residues Ser-594 and Ser-598 each carry the phosphoserine modification. The segment at 718–740 (NCSHCKRPMSSRGWVCDRCHRCA) adopts a C4-type zinc-finger fold. Zn(2+) contacts are provided by Cys-719, Cys-722, Cys-733, Cys-736, Cys-743, Cys-746, Cys-757, Cys-760, His-762, His-765, His-768, Cys-779, Cys-783, His-785, and Cys-787. Residues 741-790 (SMCAVCHHVVKGLFVWCQGCSHGGHLQHIMKWLEGSSHCPAGCGHLCEYS) form an RING-type; atypical zinc finger.

Belongs to the WD repeat WDR24 family. As to quaternary structure, component of the GATOR2 subcomplex, composed of MIOS, SEC13, SEH1L, WDR24 and WDR59. The GATOR2 complex interacts with CASTOR1 and CASTOR2; the interaction is negatively regulated by arginine. The GATOR2 complex interacts with SESN1, SESN2 and SESN3; the interaction is negatively regulated by amino acids. SESN1, SESN2 and SESN3 convey leucine availability via direct interaction with SEH1L and WDR24. Post-translationally, phosphorylation at Ser-155 by AMPK in response to glucose deprivation inactivates WDR24 by promoting interaction with 14-3-3 proteins, such as YWHAG, preventing assembly of the GATOR2 complex. In terms of processing, autoubiquitinated; MIOS is required to prevent autoubiquitination.

The protein resides in the lysosome membrane. The catalysed reaction is S-ubiquitinyl-[E2 ubiquitin-conjugating enzyme]-L-cysteine + [acceptor protein]-L-lysine = [E2 ubiquitin-conjugating enzyme]-L-cysteine + N(6)-ubiquitinyl-[acceptor protein]-L-lysine.. It participates in protein modification; protein ubiquitination. The GATOR2 complex is negatively regulated by the upstream amino acid sensors CASTOR1 and SESN2, which sequester the GATOR2 complex in absence of amino acids. In the presence of abundant amino acids, GATOR2 is released from CASTOR1 and SESN2 and activated. Catalytic component of the GATOR2 complex, a multiprotein complex that acts as an activator of the amino acid-sensing branch of the mTORC1 signaling pathway. The GATOR2 complex indirectly activates mTORC1 through the inhibition of the GATOR1 subcomplex. GATOR2 probably acts as an E3 ubiquitin-protein ligase toward GATOR1. In the presence of abundant amino acids, the GATOR2 complex mediates ubiquitination of the NPRL2 core component of the GATOR1 complex, leading to GATOR1 inactivation. In the absence of amino acids, GATOR2 is inhibited, activating the GATOR1 complex. In addition to its role in regulation of the mTORC1 complex, promotes the acidification of lysosomes and facilitates autophagic flux. Within the GATOR2 complex, WDR24 constitutes the catalytic subunit that mediates 'Lys-6'-linked ubiquitination of NPRL2. The polypeptide is GATOR2 complex protein WDR24 (Homo sapiens (Human)).